A 311-amino-acid polypeptide reads, in one-letter code: Glycosyltransferase 6 domain-containing protein 1 (311 aa).

Residues 1–5 (MKAKG) lie on the Cytoplasmic side of the membrane. The chain crosses the membrane as a helical; Signal-anchor for type II membrane protein span at residues 6–26 (RILLLTSCLFLLLLLLAKIHL). Residues 27–311 (RNHQEEELPL…KVAHYPTDDL (285 aa)) are Lumenal-facing. A glycan (N-linked (GlcNAc...) asparagine) is linked at Asn77. Substrate contacts are provided by residues 85-90 (FAVSSF), 176-178 (SVN), and 198-201 (HAWW). Catalysis depends on Glu266, which acts as the Nucleophile.

This sequence belongs to the glycosyltransferase 6 family. Requires Mn(2+) as cofactor.

It is found in the membrane. This chain is Glycosyltransferase 6 domain-containing protein 1 (Glt6d1), found in Rattus norvegicus (Rat).